The following is a 538-amino-acid chain: Dolichol kinase (538 aa).

The Lumenal segment spans residues 1–18 (MTRECAPPTPGSGAPLSG). A helical transmembrane segment spans residues 19 to 39 (SVLAEAAVVFVVVLSIHAAVW). Residues 40–74 (DRYSWCAVALAVQAFYVQYKWDRLLQQGSAVFQFR) lie on the Cytoplasmic side of the membrane. The helical transmembrane segment at 75–95 (MSANSGLLPASVVMPLLGLVM) threads the bilayer. Over 96–111 (KERCQAAGNPYFERFG) the chain is Lumenal. Residues 112–132 (IVVAATGMAVALFSSVLALGI) traverse the membrane as a helical segment. Topologically, residues 133–134 (TR) are cytoplasmic. A helical membrane pass occupies residues 135-155 (PVPTNTCVISGLAGGVIIYIM). Residues 156–163 (KHSLSVGE) are Lumenal-facing. Residues 164 to 184 (VIEVLEALLIFVYLNMILLYL) form a helical membrane-spanning segment. At 185–188 (LPRC) the chain is on the cytoplasmic side. A helical transmembrane segment spans residues 189-209 (FTPGEALLVLGGISFMLNQLI). Residues 210–224 (KRSLTVVESQGDPLD) lie on the Lumenal side of the membrane. The chain crosses the membrane as a helical span at residues 225-245 (FFLLVVVVGMVLMGIFFSTLF). At 246–254 (VFMDSGTWA) the chain is on the cytoplasmic side. Residues 255–275 (SSIFFHLMTCVLGLGVVLPWL) traverse the membrane as a helical segment. Topologically, residues 276–297 (HRLIRRNPLLWLFQFLFQTETR) are lumenal. A helical membrane pass occupies residues 298–318 (VYLLAYWCLLATVACLVVLYQ). Over 319-337 (NAKRSSSESKKHQAPTITR) the chain is Cytoplasmic. The helical transmembrane segment at 338–354 (KYFHFIVVATYIPGIIL) threads the bilayer. Topologically, residues 355 to 359 (DRPLL) are lumenal. A helical transmembrane segment spans residues 360–380 (YVAATVCLAVFIFLEYVRYFR). Over 381-401 (IKPLGHTLRSLLSLFLDERDS) the chain is Cytoplasmic. Residues 402-422 (GPLILTHIYLLLGMSLPIWLV) form a helical membrane-spanning segment. Residues 423–436 (PRPCTQKGSLGGAR) lie on the Lumenal side of the membrane. The helical transmembrane segment at 437–457 (ALVPYAGVLAVGVGDTVASIF) threads the bilayer. Residues 458–472 (GSTMGEIRWPGTKKT) lie on the Cytoplasmic side of the membrane. Positions 459–474 (STMGEIRWPGTKKTFE) are CTP-binding. A helical transmembrane segment spans residues 473–493 (FEGTMTSIFAQIISVALILIF). The Lumenal portion of the chain corresponds to 494–495 (DS). A helical transmembrane segment spans residues 496-516 (GVDLNYSYAWILGSISTVSLL). Over 517–538 (EAYTTQIDNLLLPLYLLILLMA) the chain is Cytoplasmic.

The protein belongs to the polyprenol kinase family.

The protein resides in the endoplasmic reticulum membrane. It carries out the reaction a di-trans,poly-cis-dolichol + CTP = a di-trans,poly-cis-dolichyl phosphate + CDP + H(+). The protein operates within protein modification; protein glycosylation. Catalyzes CTP-mediated phosphorylation of dolichol, the terminal step in de novo dolichyl monophosphate (Dol-P) biosynthesis. Dol-P is a lipid carrier essential for the synthesis of N-linked and O-linked oligosaccharides and for GPI anchors. The sequence is that of Dolichol kinase (DOLK) from Bos taurus (Bovine).